A 232-amino-acid polypeptide reads, in one-letter code: Ubiquinone biosynthesis O-methyltransferase (232 aa).

S-adenosyl-L-methionine-binding residues include Arg36, Gly55, Asp76, and Leu120.

Belongs to the methyltransferase superfamily. UbiG/COQ3 family.

The catalysed reaction is a 3-demethylubiquinol + S-adenosyl-L-methionine = a ubiquinol + S-adenosyl-L-homocysteine + H(+). It catalyses the reaction a 3-(all-trans-polyprenyl)benzene-1,2-diol + S-adenosyl-L-methionine = a 2-methoxy-6-(all-trans-polyprenyl)phenol + S-adenosyl-L-homocysteine + H(+). The protein operates within cofactor biosynthesis; ubiquinone biosynthesis. Functionally, O-methyltransferase that catalyzes the 2 O-methylation steps in the ubiquinone biosynthetic pathway. The sequence is that of Ubiquinone biosynthesis O-methyltransferase from Pseudomonas aeruginosa (strain UCBPP-PA14).